Reading from the N-terminus, the 248-residue chain is Adenosylcobinamide-GDP ribazoletransferase (248 aa).

The next 7 membrane-spanning stretches (helical) occupy residues 24–44 (EINL…IGAW), 70–90 (VIIT…GLFS), 106–126 (VGAN…ALFL), 134–154 (ICWL…LLFA), 168–188 (IFLG…LAVL), 189–209 (GLFF…FTII), and 228–248 (AGGQ…WGLV).

Belongs to the CobS family. It depends on Mg(2+) as a cofactor.

Its subcellular location is the cell membrane. It catalyses the reaction alpha-ribazole + adenosylcob(III)inamide-GDP = adenosylcob(III)alamin + GMP + H(+). The catalysed reaction is alpha-ribazole 5'-phosphate + adenosylcob(III)inamide-GDP = adenosylcob(III)alamin 5'-phosphate + GMP + H(+). The protein operates within cofactor biosynthesis; adenosylcobalamin biosynthesis; adenosylcobalamin from cob(II)yrinate a,c-diamide: step 7/7. Its function is as follows. Joins adenosylcobinamide-GDP and alpha-ribazole to generate adenosylcobalamin (Ado-cobalamin). Also synthesizes adenosylcobalamin 5'-phosphate from adenosylcobinamide-GDP and alpha-ribazole 5'-phosphate. The sequence is that of Adenosylcobinamide-GDP ribazoletransferase from Listeria monocytogenes serovar 1/2a (strain ATCC BAA-679 / EGD-e).